Reading from the N-terminus, the 1898-residue chain is 1-phosphatidylinositol 4,5-bisphosphate phosphodiesterase epsilon-1 (1898 aa).

Positions 66 to 328 constitute a Ras-GEF domain; it reads FPEEVAFQLS…EREQKEKEAK (263 aa). Disordered regions lie at residues 419–444 and 569–722; these read QPLD…GVGV and TNTN…GPSG. Over residues 569 to 583 the composition is skewed to polar residues; the sequence is TNTNATRPNDSSLSS. The span at 590–605 shows a compositional bias: basic residues; it reads SRLKNLKNAMQKKLRG. Low complexity-rich tracts occupy residues 625–637, 666–687, and 701–716; these read PPSI…SQSG, YTPR…GGRS, and SGSI…QVSG. The PI-PLC X-box domain occupies 910–1058; sequence EDLRYPLSHY…MKNKILIKNK (149 aa). Active-site residues include H925 and H970. 2 disordered regions span residues 1082–1178 and 1238–1274; these read QLNL…DRKT and EEGP…STQL. A compositionally biased stretch (acidic residues) spans 1098-1123; the sequence is TVDEVEDDDLDEFLDDEENEEDDQEE. Residues 1124 to 1144 show a composition bias toward basic and acidic residues; it reads VQVRSEKEDSPKTSKRAEKSA. A compositionally biased stretch (polar residues) spans 1146–1155; sequence NIKQQDSLCS. Low complexity-rich tracts occupy residues 1163 to 1172 and 1242 to 1253; these read KPSTSKTTSK and ASASLSFSSRAR. A PI-PLC Y-box domain is found at 1279–1385; the sequence is AAEFLGSVRA…CGYQLKPRCL (107 aa). The 127-residue stretch at 1391-1517 folds into the C2 domain; sequence LLYNKFLPLS…PLRTPTNLPI (127 aa). The region spanning 1570-1665 is the Ras-associating 1 domain; that stretch reads QIFVLRITGA…RRFVLRKKGS (96 aa). The segment covering 1680–1694 has biased composition (low complexity); the sequence is GTSGSSTSVSPSPLT. Positions 1680–1711 are disordered; sequence GTSGSSTSVSPSPLTKDGHVKSASSNQLHGRS. The 120-residue stretch at 1738–1857 folds into the Ras-associating 2 domain; sequence DTFLVCVHNV…GRFVLENRKD (120 aa).

As to quaternary structure, interacts (via Ras-associating domain 1) with let-60 (in GTP-bound form). Ca(2+) is required as a cofactor. As to expression, expressed in the spermatheca, vulva, intestine and excretory cells. Expressed in sensory neurons AWC, AFD, ASE, ASG and BAG, interneurons, ventral nerve cord neurons and tail neurons. Expressed in body muscles.

The catalysed reaction is a 1,2-diacyl-sn-glycero-3-phospho-(1D-myo-inositol-4,5-bisphosphate) + H2O = 1D-myo-inositol 1,4,5-trisphosphate + a 1,2-diacyl-sn-glycerol + H(+). Its function is as follows. The production of the second messenger molecules diacylglycerol (DAG) and inositol 1,4,5-trisphosphate (IP3) is mediated by activated phosphatidylinositol-specific phospholipase C enzymes. plc-1 is a bifunctional enzyme which also regulates small GTPases of the Ras superfamily through its Ras guanine-exchange factor (RasGEF) activity. By activating IP3 receptor itr-1-mediated intracellular Ca(2+) release via the production of IP3, regulates ovulation by controlling contraction and/or dilation of the distal spermatheca valve during oocyte entry and the timing of the dilation of the spermatheca-uterine valve during oocyte exit. In a similar manner, plays an essential role in epidermal morphogenesis by regulating migration of epidermal cells during ventral closure and to a lesser extent by regulating epidermal cell dorsal intercalation. Involved in the immune response to S.aureus bacterium by activating kinase dkf-1 via the production of DAG which in turn activates transcription factor hlh-30. In ASER neurons, required for adjusting the orientation behavior in salt gradients based on the memory of previous salt concentration encountered. The polypeptide is 1-phosphatidylinositol 4,5-bisphosphate phosphodiesterase epsilon-1 (Caenorhabditis elegans).